Reading from the N-terminus, the 125-residue chain is UPF0251 protein Dhaf_1981 (125 aa).

It belongs to the UPF0251 family.

In Desulfitobacterium hafniense (strain DSM 10664 / DCB-2), this protein is UPF0251 protein Dhaf_1981.